We begin with the raw amino-acid sequence, 279 residues long: Pantothenate synthetase (279 aa).

26 to 33 (MGNLHEGH) lines the ATP pocket. His33 serves as the catalytic Proton donor. Position 57 (Gln57) interacts with (R)-pantoate. Gln57 is a beta-alanine binding site. Residue 144-147 (GKKD) participates in ATP binding. A (R)-pantoate-binding site is contributed by Gln150. ATP is bound by residues Val173 and 181-184 (LSSR).

The protein belongs to the pantothenate synthetase family. As to quaternary structure, homodimer.

It is found in the cytoplasm. The catalysed reaction is (R)-pantoate + beta-alanine + ATP = (R)-pantothenate + AMP + diphosphate + H(+). It functions in the pathway cofactor biosynthesis; (R)-pantothenate biosynthesis; (R)-pantothenate from (R)-pantoate and beta-alanine: step 1/1. Functionally, catalyzes the condensation of pantoate with beta-alanine in an ATP-dependent reaction via a pantoyl-adenylate intermediate. In Burkholderia ambifaria (strain ATCC BAA-244 / DSM 16087 / CCUG 44356 / LMG 19182 / AMMD) (Burkholderia cepacia (strain AMMD)), this protein is Pantothenate synthetase.